The chain runs to 403 residues: Acetylornithine/succinyldiaminopimelate aminotransferase (403 aa).

Residues 107-108 (GA) and F140 contribute to the pyridoxal 5'-phosphate site. R143 contributes to the N(2)-acetyl-L-ornithine binding site. 225-228 (DEVQ) contributes to the pyridoxal 5'-phosphate binding site. N6-(pyridoxal phosphate)lysine is present on K254. A N(2)-acetyl-L-ornithine-binding site is contributed by T282. T283 is a binding site for pyridoxal 5'-phosphate.

It belongs to the class-III pyridoxal-phosphate-dependent aminotransferase family. ArgD subfamily. Homodimer. Pyridoxal 5'-phosphate is required as a cofactor.

It localises to the cytoplasm. The enzyme catalyses N(2)-acetyl-L-ornithine + 2-oxoglutarate = N-acetyl-L-glutamate 5-semialdehyde + L-glutamate. The catalysed reaction is N-succinyl-(2S,6S)-2,6-diaminopimelate + 2-oxoglutarate = (S)-2-succinylamino-6-oxoheptanedioate + L-glutamate. The protein operates within amino-acid biosynthesis; L-arginine biosynthesis; N(2)-acetyl-L-ornithine from L-glutamate: step 4/4. It participates in amino-acid biosynthesis; L-lysine biosynthesis via DAP pathway; LL-2,6-diaminopimelate from (S)-tetrahydrodipicolinate (succinylase route): step 2/3. Functionally, involved in both the arginine and lysine biosynthetic pathways. In Photorhabdus laumondii subsp. laumondii (strain DSM 15139 / CIP 105565 / TT01) (Photorhabdus luminescens subsp. laumondii), this protein is Acetylornithine/succinyldiaminopimelate aminotransferase.